The chain runs to 182 residues: Peptidyl-prolyl cis-trans isomerase H (182 aa).

The PPIase cyclophilin-type domain maps to Phe-15–Glu-181.

The protein belongs to the cyclophilin-type PPIase family. PPIase H subfamily.

It localises to the nucleus. The catalysed reaction is [protein]-peptidylproline (omega=180) = [protein]-peptidylproline (omega=0). Functionally, PPIases accelerate the folding of proteins. It catalyzes the cis-trans isomerization of proline imidic peptide bonds in oligopeptides. The polypeptide is Peptidyl-prolyl cis-trans isomerase H (CYP3) (Gibberella zeae (strain ATCC MYA-4620 / CBS 123657 / FGSC 9075 / NRRL 31084 / PH-1) (Wheat head blight fungus)).